A 137-amino-acid chain; its full sequence is Large-conductance mechanosensitive channel (137 aa).

2 helical membrane passes run Val16–Ile36 and Gly83–Ile103.

This sequence belongs to the MscL family. Homopentamer.

It is found in the cell inner membrane. In terms of biological role, channel that opens in response to stretch forces in the membrane lipid bilayer. May participate in the regulation of osmotic pressure changes within the cell. The sequence is that of Large-conductance mechanosensitive channel from Methylibium petroleiphilum (strain ATCC BAA-1232 / LMG 22953 / PM1).